The following is a 468-amino-acid chain: 3-isopropylmalate dehydratase large subunit (468 aa).

[4Fe-4S] cluster-binding residues include Cys347, Cys407, and Cys410.

Belongs to the aconitase/IPM isomerase family. LeuC type 1 subfamily. As to quaternary structure, heterodimer of LeuC and LeuD. [4Fe-4S] cluster is required as a cofactor.

The enzyme catalyses (2R,3S)-3-isopropylmalate = (2S)-2-isopropylmalate. It participates in amino-acid biosynthesis; L-leucine biosynthesis; L-leucine from 3-methyl-2-oxobutanoate: step 2/4. Functionally, catalyzes the isomerization between 2-isopropylmalate and 3-isopropylmalate, via the formation of 2-isopropylmaleate. The polypeptide is 3-isopropylmalate dehydratase large subunit (Prochlorococcus marinus (strain AS9601)).